A 4481-amino-acid chain; its full sequence is Dynein axonemal heavy chain 17 (4481 aa).

The interval 1-1792 (MPDLRIDYLE…FANICDAQIK (1792 aa)) is stem. The Kelch 1 repeat unit spans residues 521–569 (LLYMCGGLLERPLILVEVVPRYSVMLEMFNTELDNAKLMYDAQMAASAD). A coiled-coil region spans residues 759–826 (ENVMEYIQEM…GRVANLNKRY (68 aa)). 2 TPR repeats span residues 1533-1566 (VVEATNKPDLYNKLENLKMSLAVCEKALAEYLET) and 1688-1722 (IWWTTEVGLAFARLEEGYENAIKDYNKKQISQLNA). AAA regions lie at residues 1793–2014 (YSYE…VLVV), 2074–2295 (KIIK…IGFK), 2401–2649 (ELDP…IFQG), and 2747–2996 (SYNE…ERRY). ATP-binding positions include 1831–1838 (GPAGTGKT) and 2112–2119 (GNAGSGKS). One copy of the Kelch 2 repeat lies at 2229–2275 (ISHLRTATPATVSRAGILYINPADLGWNPVVSSWIERRKVQSEKANL). ATP is bound by residues 2439 to 2446 (GNAGTGKS) and 2785 to 2792 (GVGGSGKQ). The Kelch 3 repeat unit spans residues 2782–2834 (LLVGVGGSGKQSLSRLAAYISALDVFQITLKKGYAIPDLKMDLATQYIKSAVK). Coiled-coil stretches lie at residues 3011 to 3071 (YQNL…IQVV) and 3241 to 3293 (DVAP…EKIK). Residues 3011–3297 (YQNLLAKKRM…TAEKIKCQQE (287 aa)) form a stalk region. 2 AAA regions span residues 3389–3616 (LTDD…EIEE) and 3826–4059 (VKNF…VLYN). One copy of the TPR 3 repeat lies at 4138–4173 (PESPYLYGLHPNAEIGFLTVTSEKLFRTVLEMQPKE). Kelch repeat units follow at residues 4272–4321 (NLGL…DLLQ) and 4339–4385 (VWLA…DMTA).

The protein belongs to the dynein heavy chain family. As to quaternary structure, consists of at least two heavy chains and a number of intermediate and light chains.

It is found in the cytoplasm. The protein localises to the cytoskeleton. It localises to the flagellum axoneme. Its function is as follows. Force generating protein component of the outer dynein arms (ODAs) in the sperm flagellum. Produces force towards the minus ends of microtubules. Dynein has ATPase activity; the force-producing power stroke is thought to occur on release of ADP. Plays a major role in sperm motility, implicated in sperm flagellar assembly and beating. The polypeptide is Dynein axonemal heavy chain 17 (Mus musculus (Mouse)).